Here is a 273-residue protein sequence, read N- to C-terminus: Inositol monophosphatase 1 (273 aa).

E71, D91, V93, and D94 together coordinate Mg(2+). Residue E71 coordinates substrate. Substrate contacts are provided by residues 93–96 (VDGT), 194–196 (GSC), and D221. A Mg(2+)-binding site is contributed by D221.

It belongs to the inositol monophosphatase superfamily. Mg(2+) serves as cofactor. In terms of tissue distribution, expressed in seedlings, flowers, young and matures green fruits. Detected in roots and stems.

It carries out the reaction a myo-inositol phosphate + H2O = myo-inositol + phosphate. Its pathway is polyol metabolism; myo-inositol biosynthesis; myo-inositol from D-glucose 6-phosphate: step 2/2. Its function is as follows. Responsible for the provision of inositol required for synthesis of phosphatidylinositol and polyphosphoinositides. The polypeptide is Inositol monophosphatase 1 (IMP1) (Solanum lycopersicum (Tomato)).